The primary structure comprises 475 residues: Ribosomal RNA small subunit methyltransferase F (475 aa).

S-adenosyl-L-methionine-binding positions include 125-131 (AAAPGSK), Glu-149, Asp-176, and Asp-194. Cys-247 serves as the catalytic Nucleophile.

This sequence belongs to the class I-like SAM-binding methyltransferase superfamily. RsmB/NOP family.

The protein resides in the cytoplasm. The catalysed reaction is cytidine(1407) in 16S rRNA + S-adenosyl-L-methionine = 5-methylcytidine(1407) in 16S rRNA + S-adenosyl-L-homocysteine + H(+). Specifically methylates the cytosine at position 1407 (m5C1407) of 16S rRNA. The protein is Ribosomal RNA small subunit methyltransferase F of Aeromonas hydrophila subsp. hydrophila (strain ATCC 7966 / DSM 30187 / BCRC 13018 / CCUG 14551 / JCM 1027 / KCTC 2358 / NCIMB 9240 / NCTC 8049).